A 63-amino-acid polypeptide reads, in one-letter code: 2-hydroxymuconate tautomerase (63 aa).

The active-site Proton acceptor; via imino nitrogen is the proline 2.

It belongs to the 4-oxalocrotonate tautomerase family. In terms of assembly, homohexamer.

The enzyme catalyses (2Z,4E)-2-hydroxyhexa-2,4-dienedioate = (3E)-2-oxohex-3-enedioate. The protein operates within aromatic compound metabolism; salicylate degradation. Catalyzes the ketonization of 2-hydroxymuconate stereoselectively to yield 2-oxo-3-hexenedioate. This Pseudomonas putida (Arthrobacter siderocapsulatus) protein is 2-hydroxymuconate tautomerase (nahJ).